Consider the following 485-residue polypeptide: Glucagon receptor (485 aa).

An N-terminal signal peptide occupies residues Met-1–Ser-26. Over Ala-27–Lys-137 the chain is Extracellular. 3 disulfides stabilise this stretch: Cys-44–Cys-68, Cys-59–Cys-101, and Cys-82–Cys-122. N-linked (GlcNAc...) asparagine glycans are attached at residues Asn-47, Asn-60, Asn-75, and Asn-79. A helical transmembrane segment spans residues Met-138 to Val-162. At Ile-163–Arg-174 the chain is on the cytoplasmic side. A helical membrane pass occupies residues Asn-175 to Leu-199. At Lys-200–Arg-226 the chain is on the extracellular side. A disulfide bond links Cys-225 and Cys-295. A helical transmembrane segment spans residues Val-227–Leu-250. At Tyr-251–Phe-264 the chain is on the cytoplasmic side. Residues Phe-265–Val-286 form a helical membrane-spanning segment. Residues Lys-287–Phe-304 are Extracellular-facing. Residues Trp-305–Ile-327 traverse the membrane as a helical segment. Over His-328 to Ser-351 the chain is Cytoplasmic. The important for allosteric inhibitor binding stretch occupies residues Ser-351–Thr-354. A helical membrane pass occupies residues Thr-352 to Thr-370. Topologically, residues Asp-371–Lys-382 are extracellular. The chain crosses the membrane as a helical span at residues Leu-383–Phe-403. Residues Leu-404–Thr-485 lie on the Cytoplasmic side of the membrane. Residues Met-455–Thr-485 form a disordered region. Over residues Ser-456–Ser-475 the composition is skewed to polar residues. 2 positions are modified to phosphoserine: Ser-460 and Ser-476.

This sequence belongs to the G-protein coupled receptor 2 family. In terms of processing, ligand-binding promotes phosphorylation of serine residues in the C-terminal cytoplasmic domain. Phosphorylation is important for receptor endocytosis after ligand-binding.

It is found in the cell membrane. G-protein coupled receptor for glucagon that plays a central role in the regulation of blood glucose levels and glucose homeostasis. Regulates the rate of hepatic glucose production by promoting glycogen hydrolysis and gluconeogenesis. Plays an important role in mediating the responses to fasting. Ligand binding causes a conformation change that triggers signaling via guanine nucleotide-binding proteins (G proteins) and modulates the activity of down-stream effectors, such as adenylate cyclase. Promotes activation of adenylate cyclase. Besides, plays a role in signaling via a phosphatidylinositol-calcium second messenger system. The protein is Glucagon receptor (Gcgr) of Rattus norvegicus (Rat).